The chain runs to 158 residues: Snaclec coagulation factor X-activating enzyme light chain 2 (158 aa).

The N-terminal stretch at 1-24 (MGRFISVSFGLLVVFLSLSGTGAG) is a signal peptide. Disulfide bonds link Cys27-Cys38, Cys55-Cys152, and Cys127-Cys144. Residues 34–153 (YRYFCYRVFK…CEERYLFVCK (120 aa)) form the C-type lectin domain. Asn82 carries an N-linked (GlcNAc...) (complex) asparagine glycan.

It belongs to the snaclec family. As to quaternary structure, heterotrimer; disulfide-linked. The heterotrimer consists of 1 heavy chain (a metalloproteinase) and 2 light chains: LC1 and LC2. Post-translationally, N-glycosylated; probably required for conformation. Removal of easily accessible sugars does not change its functional capacity, but removal of the core sugars with N-glycanase causes a virtually complete loss of enzyme activity, apparently as a result of major conformational changes in the molecule. Not O-glycosylated. As to expression, expressed by the venom gland.

It localises to the secreted. Regulatory subunit of the blood coagulation factor X- and IX-activating enzyme. The enzyme activates coagulation factor X (F10) by cleaving the Arg-Ile bond and is also able to activate coagulation factor IX (F9) and protein S (PROS1) by specific cleavage of Arg-Ile and Arg-Val bonds. May serve as an exosite by which the enzyme recognizes and binds to the Gla domain of factor X (F10) and factor IX (F9) in a calcium-dependent manner. This Daboia siamensis (Eastern Russel's viper) protein is Snaclec coagulation factor X-activating enzyme light chain 2 (LC2).